The following is a 28-amino-acid chain: Potassium channel toxin alpha-KTx 9.5 (28 aa).

Intrachain disulfides connect Cys3–Cys19, Cys6–Cys24, and Cys10–Cys26. At Val28 the chain carries Valine amide.

As to expression, expressed by the venom gland.

The protein localises to the secreted. Blocks voltage-gated potassium channels Kv1.1/KCNA1 (IC(50)=145 nM), Kv1.2/KCNA2 (IC(50)=2.5 nM), and Kv1.3/KCNA3 (IC(50)=15). Also inhibits calcium-activated potassium channels (KCa/KCNN). In Buthus occitanus tunetanus (Common European scorpion), this protein is Potassium channel toxin alpha-KTx 9.5.